We begin with the raw amino-acid sequence, 358 residues long: Type II restriction enzyme SacI (358 aa).

The catalysed reaction is Endonucleolytic cleavage of DNA to give specific double-stranded fragments with terminal 5'-phosphates.. In terms of biological role, a subtype P restriction enzyme that recognizes the double-stranded sequence 5'-GAGCTC-3' and cleaves after T-5. The sequence is that of Type II restriction enzyme SacI from Streptomyces achromogenes.